The primary structure comprises 126 residues: Aspartate 1-decarboxylase (126 aa).

Ser25 (schiff-base intermediate with substrate; via pyruvic acid) is an active-site residue. Ser25 bears the Pyruvic acid (Ser) mark. Thr57 serves as a coordination point for substrate. The Proton donor role is filled by Tyr58. A substrate-binding site is contributed by 73 to 75 (GAA).

The protein belongs to the PanD family. Heterooctamer of four alpha and four beta subunits. Pyruvate serves as cofactor. Is synthesized initially as an inactive proenzyme, which is activated by self-cleavage at a specific serine bond to produce a beta-subunit with a hydroxyl group at its C-terminus and an alpha-subunit with a pyruvoyl group at its N-terminus.

The protein localises to the cytoplasm. It catalyses the reaction L-aspartate + H(+) = beta-alanine + CO2. The protein operates within cofactor biosynthesis; (R)-pantothenate biosynthesis; beta-alanine from L-aspartate: step 1/1. Catalyzes the pyruvoyl-dependent decarboxylation of aspartate to produce beta-alanine. The chain is Aspartate 1-decarboxylase from Acetivibrio thermocellus (strain ATCC 27405 / DSM 1237 / JCM 9322 / NBRC 103400 / NCIMB 10682 / NRRL B-4536 / VPI 7372) (Clostridium thermocellum).